A 209-amino-acid polypeptide reads, in one-letter code: Ras-like protein (209 aa).

A GTP-binding site is contributed by 15 to 22 (GGGGEGKS). The short motif at 37 to 45 (YDPTIEESY) is the Effector region element. Residues 62 to 66 (DTAGQ) and 121 to 124 (NKCD) contribute to the GTP site. 2 S-palmitoyl cysteine lipidation sites follow: Cys202 and Cys203. A Cysteine methyl ester modification is found at Cys206. The S-geranylgeranyl cysteine moiety is linked to residue Cys206. Positions 207–209 (IVM) are cleaved as a propeptide — removed in mature form.

The protein belongs to the small GTPase superfamily. Ras family.

It localises to the cell membrane. It carries out the reaction GTP + H2O = GDP + phosphate + H(+). With respect to regulation, alternates between an inactive form bound to GDP and an active form bound to GTP. Activated by a guanine nucleotide-exchange factor (GEF) and inactivated by a GTPase-activating protein (GAP). This chain is Ras-like protein, found in Laccaria bicolor (Bicoloured deceiver).